We begin with the raw amino-acid sequence, 395 residues long: 8-amino-7-oxononanoate synthase/2-amino-3-ketobutyrate coenzyme A ligase (395 aa).

110 to 111 (GF) lines the pyridoxal 5'-phosphate pocket. Histidine 135 provides a ligand contact to substrate. Pyridoxal 5'-phosphate is bound by residues serine 182, 207 to 210 (DDAH), and 239 to 242 (TLSK). Lysine 242 bears the N6-(pyridoxal phosphate)lysine mark. Threonine 356 serves as a coordination point for substrate.

Belongs to the class-II pyridoxal-phosphate-dependent aminotransferase family. In terms of assembly, homodimer. It depends on pyridoxal 5'-phosphate as a cofactor.

The catalysed reaction is 6-carboxyhexanoyl-[ACP] + L-alanine + H(+) = (8S)-8-amino-7-oxononanoate + holo-[ACP] + CO2. It carries out the reaction glycine + acetyl-CoA = (2S)-2-amino-3-oxobutanoate + CoA. It functions in the pathway cofactor biosynthesis; biotin biosynthesis. Functionally, catalyzes the decarboxylative condensation of pimeloyl-[acyl-carrier protein] and L-alanine to produce 8-amino-7-oxononanoate (AON), [acyl-carrier protein], and carbon dioxide. Can also use pimeloyl-CoA instead of pimeloyl-ACP as substrate. It also converts 2-amino-3-ketobutyrate and CoA to glycine and acetyl-CoA. Activity is also observed with the following combinations of substrates: acetyl-CoA and either L-alanine or L-serine, pimeloyl-CoA and either glycine or L-serine, and palmitoyl-CoA with L-alanine. The protein is 8-amino-7-oxononanoate synthase/2-amino-3-ketobutyrate coenzyme A ligase of Thermus thermophilus (strain ATCC 27634 / DSM 579 / HB8).